The chain runs to 353 residues: MAFDDRLERIVARSEEVQALMSSGELTGEDFTRLSQEYAELEPVVASIQAWKSAEEQKAGAQALLDDPEMRELAQMELAEIEATLPDLQHALRLALLPKDAADERSAILEIRPAAGGDEAGLFAAELFDAYRRFSEQNGWRFEVMEYAENEVAGLKEGMATISGRSVFARLKYESGVHRVQRVPATESQGRIHTSTVTVAVLPEAEEVDVTVNDDDLRIDVYRASGAGGQHVNKTESAVRVTHMPSGIVVAMQEEKSQHKNKAKAMKILRARLYERERAQLHATRAADRKSQVGTGDRSERIRTYNFPQGRVTDHRINLTLYKIDRIMGGEFDEIIDALTREEQTELLAAEGF.

Gln230 is modified (N5-methylglutamine).

It belongs to the prokaryotic/mitochondrial release factor family. In terms of processing, methylated by PrmC. Methylation increases the termination efficiency of RF1.

The protein localises to the cytoplasm. Functionally, peptide chain release factor 1 directs the termination of translation in response to the peptide chain termination codons UAG and UAA. The chain is Peptide chain release factor 1 from Gluconobacter oxydans (strain 621H) (Gluconobacter suboxydans).